A 394-amino-acid polypeptide reads, in one-letter code: Salivary plasminogen activator gamma (394 aa).

Residues 1-36 form the signal peptide; sequence MVNTMKTKLLCVLLLCGAVFSLPRQETYRQLARGSR. A Kringle domain is found at 45–126; the sequence is CYKDQGVTYR…TSESCSVPVC (82 aa). Intrachain disulfides connect Cys45-Cys126, Cys66-Cys108, Cys97-Cys121, Cys131-Cys262, Cys174-Cys190, Cys182-Cys251, Cys276-Cys351, Cys308-Cys324, and Cys341-Cys369. The 251-residue stretch at 143–393 folds into the Peptidase S1 domain; the sequence is STGGLFTDIT…YLGWIRDNMR (251 aa). Residues His189 and Asp238 each act as charge relay system in the active site. An N-linked (GlcNAc...) asparagine glycan is attached at Asn315. Ser345 (charge relay system) is an active-site residue.

This sequence belongs to the peptidase S1 family. Monomer.

The protein resides in the secreted. It catalyses the reaction Specific cleavage of Arg-|-Val bond in plasminogen to form plasmin.. Functionally, probably essential to support the feeding habits of this exclusively haematophagous animal. Probable potent thrombolytic agent. This Desmodus rotundus (Vampire bat) protein is Salivary plasminogen activator gamma.